Reading from the N-terminus, the 102-residue chain is Integration host factor subunit beta (102 aa).

The segment at 54–102 (HHRPARMGRNPKTGEPVALPAKYVPHFKPGKELRERVNSSRHQAPLRSQ) is disordered. A compositionally biased stretch (basic and acidic residues) spans 82 to 91 (PGKELRERVN). A compositionally biased stretch (polar residues) spans 93 to 102 (SRHQAPLRSQ).

This sequence belongs to the bacterial histone-like protein family. Heterodimer of an alpha and a beta chain.

In terms of biological role, this protein is one of the two subunits of integration host factor, a specific DNA-binding protein that functions in genetic recombination as well as in transcriptional and translational control. The polypeptide is Integration host factor subunit beta (Halorhodospira halophila (strain DSM 244 / SL1) (Ectothiorhodospira halophila (strain DSM 244 / SL1))).